Reading from the N-terminus, the 275-residue chain is Ribosomal RNA small subunit methyltransferase A (275 aa).

Residues N19, L21, G46, E71, D94, and N117 each contribute to the S-adenosyl-L-methionine site.

This sequence belongs to the class I-like SAM-binding methyltransferase superfamily. rRNA adenine N(6)-methyltransferase family. RsmA subfamily.

The protein resides in the cytoplasm. It carries out the reaction adenosine(1518)/adenosine(1519) in 16S rRNA + 4 S-adenosyl-L-methionine = N(6)-dimethyladenosine(1518)/N(6)-dimethyladenosine(1519) in 16S rRNA + 4 S-adenosyl-L-homocysteine + 4 H(+). Specifically dimethylates two adjacent adenosines (A1518 and A1519) in the loop of a conserved hairpin near the 3'-end of 16S rRNA in the 30S particle. May play a critical role in biogenesis of 30S subunits. This is Ribosomal RNA small subunit methyltransferase A from Burkholderia lata (strain ATCC 17760 / DSM 23089 / LMG 22485 / NCIMB 9086 / R18194 / 383).